Consider the following 384-residue polypeptide: 5-amino-6-(D-ribitylamino)uracil--L-tyrosine 4-hydroxyphenyl transferase 2 (384 aa).

In terms of domain architecture, Radical SAM core spans 53–286 (VSYVVNRNIY…IAISRVILHT (234 aa)). [4Fe-4S] cluster-binding residues include Cys-67, Cys-71, and Cys-74.

It belongs to the radical SAM superfamily. CofH family. Consists of two subunits, CofG and CofH. [4Fe-4S] cluster is required as a cofactor.

The enzyme catalyses 5-amino-6-(D-ribitylamino)uracil + L-tyrosine + S-adenosyl-L-methionine = 5-amino-5-(4-hydroxybenzyl)-6-(D-ribitylimino)-5,6-dihydrouracil + 2-iminoacetate + 5'-deoxyadenosine + L-methionine + H(+). Its pathway is cofactor biosynthesis; coenzyme F0 biosynthesis. Functionally, catalyzes the radical-mediated synthesis of 5-amino-5-(4-hydroxybenzyl)-6-(D-ribitylimino)-5,6-dihydrouracil from 5-amino-6-(D-ribitylamino)uracil and L-tyrosine. This is 5-amino-6-(D-ribitylamino)uracil--L-tyrosine 4-hydroxyphenyl transferase 2 from Methanosarcina barkeri (strain Fusaro / DSM 804).